The sequence spans 159 residues: Transcription elongation factor A protein-like 1 (159 aa).

The tract at residues M1–N121 is disordered. The segment covering K17–P34 has biased composition (basic and acidic residues). A compositionally biased stretch (acidic residues) spans Q37–L54. Basic and acidic residues-rich tracts occupy residues S64 to E80 and H95 to G119.

It belongs to the TFS-II family. TFA subfamily.

The protein resides in the nucleus. In terms of biological role, may be involved in transcriptional regulation. Modulates various viral and cellular promoters in a promoter context-dependent manner. Does not bind DNA directly. The chain is Transcription elongation factor A protein-like 1 from Gorilla gorilla gorilla (Western lowland gorilla).